Here is an 80-residue protein sequence, read N- to C-terminus: Small ribosomal subunit protein uS17 (80 aa).

This sequence belongs to the universal ribosomal protein uS17 family. In terms of assembly, part of the 30S ribosomal subunit.

In terms of biological role, one of the primary rRNA binding proteins, it binds specifically to the 5'-end of 16S ribosomal RNA. This chain is Small ribosomal subunit protein uS17, found in Cereibacter sphaeroides (strain ATCC 17025 / ATH 2.4.3) (Rhodobacter sphaeroides).